The following is a 342-amino-acid chain: UDP-N-acetylglucosamine--N-acetylmuramyl-(pentapeptide) pyrophosphoryl-undecaprenol N-acetylglucosamine transferase (342 aa).

UDP-N-acetyl-alpha-D-glucosamine-binding positions include 10 to 12, Asn124, Ser177, and Gln275; that span reads TGG.

The protein belongs to the glycosyltransferase 28 family. MurG subfamily.

It localises to the cell inner membrane. It catalyses the reaction di-trans,octa-cis-undecaprenyl diphospho-N-acetyl-alpha-D-muramoyl-L-alanyl-D-glutamyl-meso-2,6-diaminopimeloyl-D-alanyl-D-alanine + UDP-N-acetyl-alpha-D-glucosamine = di-trans,octa-cis-undecaprenyl diphospho-[N-acetyl-alpha-D-glucosaminyl-(1-&gt;4)]-N-acetyl-alpha-D-muramoyl-L-alanyl-D-glutamyl-meso-2,6-diaminopimeloyl-D-alanyl-D-alanine + UDP + H(+). Its pathway is cell wall biogenesis; peptidoglycan biosynthesis. In terms of biological role, cell wall formation. Catalyzes the transfer of a GlcNAc subunit on undecaprenyl-pyrophosphoryl-MurNAc-pentapeptide (lipid intermediate I) to form undecaprenyl-pyrophosphoryl-MurNAc-(pentapeptide)GlcNAc (lipid intermediate II). In Campylobacter jejuni subsp. doylei (strain ATCC BAA-1458 / RM4099 / 269.97), this protein is UDP-N-acetylglucosamine--N-acetylmuramyl-(pentapeptide) pyrophosphoryl-undecaprenol N-acetylglucosamine transferase.